Here is a 322-residue protein sequence, read N- to C-terminus: HPr kinase/phosphorylase (322 aa).

Catalysis depends on residues H143 and K164. 158–165 (GRSGVGKS) serves as a coordination point for ATP. S165 contacts Mg(2+). The active-site Proton acceptor; for phosphorylation activity. Proton donor; for dephosphorylation activity is the D182. The interval 206-215 (MEIRGLGILN) is important for the catalytic mechanism of both phosphorylation and dephosphorylation. E207 serves as a coordination point for Mg(2+). Residue R250 is part of the active site. An important for the catalytic mechanism of dephosphorylation region spans residues 271-276 (PVKPGR).

The protein belongs to the HPrK/P family. As to quaternary structure, homohexamer. Requires Mg(2+) as cofactor.

The catalysed reaction is [HPr protein]-L-serine + ATP = [HPr protein]-O-phospho-L-serine + ADP + H(+). It carries out the reaction [HPr protein]-O-phospho-L-serine + phosphate + H(+) = [HPr protein]-L-serine + diphosphate. In terms of biological role, catalyzes the ATP- as well as the pyrophosphate-dependent phosphorylation of a specific serine residue in HPr, a phosphocarrier protein of the phosphoenolpyruvate-dependent sugar phosphotransferase system (PTS). HprK/P also catalyzes the pyrophosphate-producing, inorganic phosphate-dependent dephosphorylation (phosphorolysis) of seryl-phosphorylated HPr (P-Ser-HPr). The polypeptide is HPr kinase/phosphorylase (Leptospira biflexa serovar Patoc (strain Patoc 1 / Ames)).